The primary structure comprises 53 residues: UPF0391 membrane protein Meso_3392 (53 aa).

2 helical membrane passes run 4–24 (WILI…HSLA) and 33–53 (ILIA…IAIA).

The protein belongs to the UPF0391 family.

The protein localises to the cell membrane. This chain is UPF0391 membrane protein Meso_3392, found in Chelativorans sp. (strain BNC1).